Consider the following 335-residue polypeptide: Biotin synthase (335 aa).

Residues 51-281 (YRVQLASLLS…RSRVRLSAGR (231 aa)) enclose the Radical SAM core domain. Residues C66, C70, and C73 each contribute to the [4Fe-4S] cluster site. The [2Fe-2S] cluster site is built by C112, C144, C204, and R276.

The protein belongs to the radical SAM superfamily. Biotin synthase family. As to quaternary structure, homodimer. [4Fe-4S] cluster is required as a cofactor. It depends on [2Fe-2S] cluster as a cofactor.

The catalysed reaction is (4R,5S)-dethiobiotin + (sulfur carrier)-SH + 2 reduced [2Fe-2S]-[ferredoxin] + 2 S-adenosyl-L-methionine = (sulfur carrier)-H + biotin + 2 5'-deoxyadenosine + 2 L-methionine + 2 oxidized [2Fe-2S]-[ferredoxin]. It functions in the pathway cofactor biosynthesis; biotin biosynthesis; biotin from 7,8-diaminononanoate: step 2/2. Its function is as follows. Catalyzes the conversion of dethiobiotin (DTB) to biotin by the insertion of a sulfur atom into dethiobiotin via a radical-based mechanism. The chain is Biotin synthase from Prochlorococcus marinus (strain MIT 9303).